We begin with the raw amino-acid sequence, 219 residues long: Probable N-acetyltransferase camello (219 aa).

2 helical membrane passes run 44-64 (FITF…VLAL) and 66-86 (SLVA…HGLA). In terms of domain architecture, N-acetyltransferase spans 62–211 (LALTSLVALL…VHQYTSFTVA (150 aa)).

Belongs to the camello family.

Its subcellular location is the golgi apparatus membrane. In terms of biological role, plays a role in regulation of gastrulation, possibly by controlled reduction of cell adhesion in the periblastopore region which is necessary for optimal cell motility. The chain is Probable N-acetyltransferase camello from Xenopus tropicalis (Western clawed frog).